A 563-amino-acid chain; its full sequence is Eukaryotic translation initiation factor 3 subunit D-1 (563 aa).

The interval Val98–Leu136 is disordered. Residues Lys100–Asn120 show a composition bias toward basic residues. The tract at residues Glu291 to Pro305 is RNA gate.

This sequence belongs to the eIF-3 subunit D family. Component of the eukaryotic translation initiation factor 3 (eIF-3) complex. The eIF-3 complex interacts with pix.

It is found in the cytoplasm. MRNA cap-binding component of the eukaryotic translation initiation factor 3 (eIF-3) complex, which is involved in protein synthesis of a specialized repertoire of mRNAs and, together with other initiation factors, stimulates binding of mRNA and methionyl-tRNAi to the 40S ribosome. The eIF-3 complex specifically targets and initiates translation of a subset of mRNAs involved in cell proliferation. In the eIF-3 complex, eif3d specifically recognizes and binds the 7-methylguanosine cap of a subset of mRNAs. This chain is Eukaryotic translation initiation factor 3 subunit D-1, found in Drosophila pseudoobscura pseudoobscura (Fruit fly).